We begin with the raw amino-acid sequence, 338 residues long: Large ribosomal subunit protein uL10 (338 aa).

Over residues 309-327 (KAEVEEAKEEEKEEKKEEA) the composition is skewed to basic and acidic residues. Positions 309 to 338 (KAEVEEAKEEEKEEKKEEAAPAAAGLGLLF) are disordered.

The protein belongs to the universal ribosomal protein uL10 family. In terms of assembly, part of the 50S ribosomal subunit. Forms part of the ribosomal stalk which helps the ribosome interact with GTP-bound translation factors. Forms a heptameric L10(L12)2(L12)2(L12)2 complex, where L10 forms an elongated spine to which the L12 dimers bind in a sequential fashion.

Forms part of the ribosomal stalk, playing a central role in the interaction of the ribosome with GTP-bound translation factors. The polypeptide is Large ribosomal subunit protein uL10 (Methanothermococcus thermolithotrophicus (Methanococcus thermolithotrophicus)).